The sequence spans 428 residues: Serine--tRNA ligase (428 aa).

235–237 is an L-serine binding site; the sequence is TAE. 266–268 contacts ATP; sequence RSE. Glu289 contributes to the L-serine binding site. An ATP-binding site is contributed by 353–356; the sequence is EISS. L-serine is bound at residue Ser389.

The protein belongs to the class-II aminoacyl-tRNA synthetase family. Type-1 seryl-tRNA synthetase subfamily. Homodimer. The tRNA molecule binds across the dimer.

Its subcellular location is the cytoplasm. It carries out the reaction tRNA(Ser) + L-serine + ATP = L-seryl-tRNA(Ser) + AMP + diphosphate + H(+). It catalyses the reaction tRNA(Sec) + L-serine + ATP = L-seryl-tRNA(Sec) + AMP + diphosphate + H(+). It functions in the pathway aminoacyl-tRNA biosynthesis; selenocysteinyl-tRNA(Sec) biosynthesis; L-seryl-tRNA(Sec) from L-serine and tRNA(Sec): step 1/1. Functionally, catalyzes the attachment of serine to tRNA(Ser). Is also able to aminoacylate tRNA(Sec) with serine, to form the misacylated tRNA L-seryl-tRNA(Sec), which will be further converted into selenocysteinyl-tRNA(Sec). This is Serine--tRNA ligase from Shewanella baltica (strain OS223).